The sequence spans 229 residues: UPF0758 protein Mbur_0382 (229 aa).

One can recognise an MPN domain in the interval 106–228 (KIRSANDVYS…YVSLKEEGYI (123 aa)). Residues His-177, His-179, and Asp-190 each coordinate Zn(2+). The JAMM motif motif lies at 177-190 (HNHPSGDPAPSRED).

Belongs to the UPF0758 family.

The chain is UPF0758 protein Mbur_0382 from Methanococcoides burtonii (strain DSM 6242 / NBRC 107633 / OCM 468 / ACE-M).